Consider the following 246-residue polypeptide: 1-(5-phosphoribosyl)-5-[(5-phosphoribosylamino)methylideneamino] imidazole-4-carboxamide isomerase (246 aa).

The Proton acceptor role is filled by D8. The active-site Proton donor is D131.

This sequence belongs to the HisA/HisF family.

It is found in the cytoplasm. The enzyme catalyses 1-(5-phospho-beta-D-ribosyl)-5-[(5-phospho-beta-D-ribosylamino)methylideneamino]imidazole-4-carboxamide = 5-[(5-phospho-1-deoxy-D-ribulos-1-ylimino)methylamino]-1-(5-phospho-beta-D-ribosyl)imidazole-4-carboxamide. It functions in the pathway amino-acid biosynthesis; L-histidine biosynthesis; L-histidine from 5-phospho-alpha-D-ribose 1-diphosphate: step 4/9. The protein is 1-(5-phosphoribosyl)-5-[(5-phosphoribosylamino)methylideneamino] imidazole-4-carboxamide isomerase of Delftia acidovorans (strain DSM 14801 / SPH-1).